Consider the following 295-residue polypeptide: Ribosomal RNA small subunit methyltransferase A (295 aa).

Residues asparagine 31, leucine 33, glycine 58, glutamate 79, aspartate 104, and asparagine 129 each contribute to the S-adenosyl-L-methionine site.

The protein belongs to the class I-like SAM-binding methyltransferase superfamily. rRNA adenine N(6)-methyltransferase family. RsmA subfamily.

The protein localises to the cytoplasm. It catalyses the reaction adenosine(1518)/adenosine(1519) in 16S rRNA + 4 S-adenosyl-L-methionine = N(6)-dimethyladenosine(1518)/N(6)-dimethyladenosine(1519) in 16S rRNA + 4 S-adenosyl-L-homocysteine + 4 H(+). Functionally, specifically dimethylates two adjacent adenosines (A1518 and A1519) in the loop of a conserved hairpin near the 3'-end of 16S rRNA in the 30S particle. May play a critical role in biogenesis of 30S subunits. The protein is Ribosomal RNA small subunit methyltransferase A of Enterococcus faecalis (strain ATCC 700802 / V583).